The following is a 1058-amino-acid chain: Protein argonaute MEL1 (1058 aa).

Gly residues-rich tracts occupy residues 1 to 12 (MAYRGGGRGGRG) and 24 to 37 (DVPGRGGGGGGGGA). 2 disordered regions span residues 1-77 (MAYR…YGAP) and 115-147 (RAPPPSHSSAPAPYQPAAAAPAPSSSSTAPSAT). Over residues 48-70 (WPPPGMTPRPGPPQPQYPRPGPP) the composition is skewed to pro residues. Low complexity predominate over residues 121 to 147 (HSSAPAPYQPAAAAPAPSSSSTAPSAT). Residues 407-520 (TVIQFVEEFL…LPMEVCKIVE (114 aa)) enclose the PAZ domain. The 321-residue stretch at 696–1016 (LLIVILPEVS…AAFRARYYVE (321 aa)) folds into the Piwi domain.

Belongs to the argonaute family. Ago subfamily.

The protein localises to the nucleus. Its subcellular location is the nucleolus. In terms of biological role, essential for the progression of premeiotic mitosis and meiosis during sporogenesis. Regulates the cell division of premeiotic germ cells, the proper modification of meiotic chromosomes, and the faithful progression of meiosis, probably via small RNA-mediated gene silencing. May be involved in histone H3 'Lys-9' demethylation in the pericentromeric region. The sequence is that of Protein argonaute MEL1 (MEL1) from Oryza sativa subsp. japonica (Rice).